The chain runs to 250 residues: UPF0259 membrane protein Spro_2675 (250 aa).

Helical transmembrane passes span isoleucine 23–proline 43, alanine 87–isoleucine 107, leucine 132–valine 152, isoleucine 156–phenylalanine 176, valine 192–serine 212, and alanine 222–phenylalanine 242.

This sequence belongs to the UPF0259 family.

It localises to the cell inner membrane. The polypeptide is UPF0259 membrane protein Spro_2675 (Serratia proteamaculans (strain 568)).